A 326-amino-acid chain; its full sequence is Endochitinase (326 aa).

Positions 1–25 (MVYCTASLPLLLLLLVGLLAGEAFA) are cleaved as a signal peptide. Positions 26-66 (EQCGRQAGGALCPGGLCCSQFGWCGSTSDYCGPTCQSQCGG) constitute a Chitin-binding type-1 domain. 7 cysteine pairs are disulfide-bonded: C28/C43, C37/C49, C42/C56, C60/C64, C96/C158, C170/C178, and C277/C309. The Proton donor role is filled by E140.

This sequence belongs to the glycosyl hydrolase 19 family. Chitinase class I subfamily. In terms of tissue distribution, expressed in the pulp of the fruit (at protein level). Expressed in mesocarp (at protein level).

The catalysed reaction is Random endo-hydrolysis of N-acetyl-beta-D-glucosaminide (1-&gt;4)-beta-linkages in chitin and chitodextrins.. Its function is as follows. Defense against chitin-containing fungal pathogens. Has in vitro antifungal activity against F.oxysporum inhibiting its growth and the branching of its hyphae. Has endochitinase activity, but no exochitinase or lysozyme activities. This is Endochitinase from Persea americana (Avocado).